A 458-amino-acid chain; its full sequence is NADH-quinone oxidoreductase subunit N (458 aa).

A run of 14 helical transmembrane segments spans residues leucine 2 to leucine 22, isoleucine 30 to serine 50, glycine 62 to isoleucine 82, alanine 93 to isoleucine 113, phenylalanine 118 to phenylalanine 138, phenylalanine 153 to phenylalanine 173, leucine 196 to leucine 216, phenylalanine 235 to isoleucine 255, isoleucine 261 to alanine 281, leucine 290 to asparagine 310, leucine 319 to phenylalanine 339, isoleucine 361 to phenylalanine 381, phenylalanine 397 to valine 417, and leucine 438 to phenylalanine 458.

The protein belongs to the complex I subunit 2 family. NDH-1 is composed of 14 different subunits. Subunits NuoA, H, J, K, L, M, N constitute the membrane sector of the complex.

It is found in the cell inner membrane. It carries out the reaction a quinone + NADH + 5 H(+)(in) = a quinol + NAD(+) + 4 H(+)(out). NDH-1 shuttles electrons from NADH, via FMN and iron-sulfur (Fe-S) centers, to quinones in the respiratory chain. The immediate electron acceptor for the enzyme in this species is believed to be ubiquinone. Couples the redox reaction to proton translocation (for every two electrons transferred, four hydrogen ions are translocated across the cytoplasmic membrane), and thus conserves the redox energy in a proton gradient. In Rickettsia typhi (strain ATCC VR-144 / Wilmington), this protein is NADH-quinone oxidoreductase subunit N.